Consider the following 324-residue polypeptide: Olfactory receptor 11H4 (324 aa).

The Extracellular portion of the chain corresponds to 1 to 35; that stretch reads MSFFFVDLRPMNRSATHIVTEFILLGFPGCWKIQI. N-linked (GlcNAc...) asparagine glycosylation is present at asparagine 12. Residues 36–56 form a helical membrane-spanning segment; the sequence is FLFSLFLVIYVLTLLGNGAII. Topologically, residues 57–64 are cytoplasmic; sequence YAVRCNPL. The helical transmembrane segment at 65–85 threads the bilayer; it reads LHTPMYFLLGNFAFLEIWYVS. Residues 86–109 are Extracellular-facing; that stretch reads STIPNMLVNILSKTKAISFSGCFL. Residues cysteine 107 and cysteine 199 are joined by a disulfide bond. The helical transmembrane segment at 110–130 threads the bilayer; that stretch reads QFYFFFSLGTTECLFLAVMAY. Topologically, residues 131–149 are cytoplasmic; that stretch reads DRYLAICHPLQYPAIMTVR. Residues 150–170 traverse the membrane as a helical segment; that stretch reads FCGKLVSFCWLIGFLGYPIPI. Over 171 to 207 the chain is Extracellular; sequence FYISQLPFCGPNIIDHFLCDMDPLMALSCAPAPITEC. A helical membrane pass occupies residues 208–227; it reads IFYTQSSLVLFFTSMYILRS. Over 228–247 the chain is Cytoplasmic; the sequence is YILLLTAVFQVPSAAGRRKA. Residues 248–268 form a helical membrane-spanning segment; the sequence is FSTCGSHLVVVSLFYGTVMVM. The Extracellular portion of the chain corresponds to 269 to 281; sequence YVSPTYGIPTLLQ. Residues 282 to 302 form a helical membrane-spanning segment; that stretch reads KILTLVYSVTTPLFNPLIYTL. Topologically, residues 303 to 324 are cytoplasmic; the sequence is RNKDMKLALRNVLFGMRIRQNS.

This sequence belongs to the G-protein coupled receptor 1 family.

Its subcellular location is the cell membrane. Odorant receptor. The chain is Olfactory receptor 11H4 (OR11H4) from Homo sapiens (Human).